Reading from the N-terminus, the 281-residue chain is Sulfur carrier protein FdhD (281 aa).

The Cysteine persulfide intermediate role is filled by Cys117.

It belongs to the FdhD family.

It localises to the cytoplasm. Functionally, required for formate dehydrogenase (FDH) activity. Acts as a sulfur carrier protein that transfers sulfur from IscS to the molybdenum cofactor prior to its insertion into FDH. This is Sulfur carrier protein FdhD from Xanthomonas oryzae pv. oryzae (strain MAFF 311018).